The chain runs to 189 residues: Shikimate kinase (189 aa).

Residue alanine 22–threonine 27 coordinates ATP. Serine 26 is a binding site for Mg(2+). Substrate-binding residues include aspartate 44, arginine 68, and glycine 90. Residue arginine 128 participates in ATP binding. Arginine 147 serves as a coordination point for substrate.

It belongs to the shikimate kinase family. In terms of assembly, monomer. The cofactor is Mg(2+).

It is found in the cytoplasm. It carries out the reaction shikimate + ATP = 3-phosphoshikimate + ADP + H(+). The protein operates within metabolic intermediate biosynthesis; chorismate biosynthesis; chorismate from D-erythrose 4-phosphate and phosphoenolpyruvate: step 5/7. Functionally, catalyzes the specific phosphorylation of the 3-hydroxyl group of shikimic acid using ATP as a cosubstrate. This Synechococcus sp. (strain JA-3-3Ab) (Cyanobacteria bacterium Yellowstone A-Prime) protein is Shikimate kinase.